The primary structure comprises 279 residues: Large ribosomal subunit protein uL2 (279 aa).

Disordered stretches follow at residues 29–53 and 224–279; these read PEKS…TTRH and VAMN…KKRK. A compositionally biased stretch (basic and acidic residues) spans 253 to 268; sequence KEGRTRHPNKESDKLI. Basic residues predominate over residues 269–279; sequence VRRRNAGKKRK.

The protein belongs to the universal ribosomal protein uL2 family. In terms of assembly, part of the 50S ribosomal subunit. Forms a bridge to the 30S subunit in the 70S ribosome.

Functionally, one of the primary rRNA binding proteins. Required for association of the 30S and 50S subunits to form the 70S ribosome, for tRNA binding and peptide bond formation. It has been suggested to have peptidyltransferase activity; this is somewhat controversial. Makes several contacts with the 16S rRNA in the 70S ribosome. This chain is Large ribosomal subunit protein uL2, found in Leifsonia xyli subsp. xyli (strain CTCB07).